We begin with the raw amino-acid sequence, 356 residues long: Methionine import ATP-binding protein MetN (356 aa).

The ABC transporter domain occupies I7–I250. G43–S50 lines the ATP pocket.

Belongs to the ABC transporter superfamily. Methionine importer (TC 3.A.1.24) family. As to quaternary structure, the complex is composed of two ATP-binding proteins (MetN), two transmembrane proteins (MetI) and a solute-binding protein (MetQ).

The protein localises to the cell membrane. It carries out the reaction L-methionine(out) + ATP + H2O = L-methionine(in) + ADP + phosphate + H(+). It catalyses the reaction D-methionine(out) + ATP + H2O = D-methionine(in) + ADP + phosphate + H(+). In terms of biological role, part of the ABC transporter complex MetNIQ involved in methionine import. Responsible for energy coupling to the transport system. This Streptococcus agalactiae serotype III (strain NEM316) protein is Methionine import ATP-binding protein MetN.